The primary structure comprises 141 residues: Hemoglobin subunit alpha (141 aa).

The Globin domain maps to 1-141 (VLSAADKTAI…VATALGSHYR (141 aa)). An O2-binding site is contributed by His-59. A heme b-binding site is contributed by His-88.

The protein belongs to the globin family. As to quaternary structure, heterotetramer of two alpha chains and two beta chains. As to expression, red blood cells.

Involved in oxygen transport from the lung to the various peripheral tissues. The polypeptide is Hemoglobin subunit alpha (HBA) (Squalus acanthias (Spiny dogfish)).